A 425-amino-acid chain; its full sequence is Alpha-(1,3)-fucosyltransferase C (425 aa).

Over 1 to 37 (MYLGRVHCSFEVPGLLSGRVGHMSMAVRSVRLACGPR) the chain is Cytoplasmic. A helical; Signal-anchor for type II membrane protein membrane pass occupies residues 38 to 58 (GALLLLLLVLLGVLVVLHKVT). The Lumenal segment spans residues 59–425 (QSPLLNQNKI…SCRLQSRIRL (367 aa)). 2 N-linked (GlcNAc...) asparagine glycosylation sites follow: Asn187 and Asn230.

Belongs to the glycosyltransferase 10 family.

Its subcellular location is the golgi apparatus. The protein localises to the golgi stack membrane. It functions in the pathway protein modification; protein glycosylation. This is Alpha-(1,3)-fucosyltransferase C (FucTC) from Drosophila melanogaster (Fruit fly).